The following is a 311-amino-acid chain: MNKKSTAIFLMGPTASGKTDLAIQLHQELPVEVISVDSALIYKGMDIGTAKPNAQELALTPHRLIDIKDPSENYSAAEFRHDALQEMQKITQQGKIPLLVGGTMLYYKALLEGLSPLPSADEKVRLEIEQKAEKFGWATLHNELAKIDPISAQRINPNDSQRINRALEVFYLTGQSLTELTAQKGKEIPYHIIQFAIAPDRAVLHQRIEQRFHKMIEQGFQQEVEKLYQRSDLHPNLPSIRCVGYRQMWEYLQGNYDKDEMIFRGICATRQLAKRQLTWLRGWKSPIEWLDSLNPKSTKEKIIKTIKHNCK.

12–19 (GPTASGKT) is an ATP binding site. 14–19 (TASGKT) is a binding site for substrate. Interaction with substrate tRNA regions lie at residues 37–40 (DSAL), 161–165 (QRINR), and 241–246 (RCVGYR).

This sequence belongs to the IPP transferase family. Monomer. Requires Mg(2+) as cofactor.

It catalyses the reaction adenosine(37) in tRNA + dimethylallyl diphosphate = N(6)-dimethylallyladenosine(37) in tRNA + diphosphate. Its function is as follows. Catalyzes the transfer of a dimethylallyl group onto the adenine at position 37 in tRNAs that read codons beginning with uridine, leading to the formation of N6-(dimethylallyl)adenosine (i(6)A). The chain is tRNA dimethylallyltransferase from Histophilus somni (strain 129Pt) (Haemophilus somnus).